We begin with the raw amino-acid sequence, 238 residues long: Ion-translocating oxidoreductase complex subunit E (238 aa).

A run of 6 helical transmembrane segments spans residues 24-44 (ALWQ…TLAV), 52-72 (LGMG…ISSM), 84-104 (VMIG…NAWM), 106-126 (ELYK…AVLG), 141-161 (ILDG…IGGI), and 195-215 (GILL…LLAA).

This sequence belongs to the NqrDE/RnfAE family. As to quaternary structure, the complex is composed of six subunits: RnfA, RnfB, RnfC, RnfD, RnfE and RnfG.

Its subcellular location is the cell inner membrane. Its function is as follows. Part of a membrane-bound complex that couples electron transfer with translocation of ions across the membrane. The protein is Ion-translocating oxidoreductase complex subunit E of Azotobacter vinelandii (strain DJ / ATCC BAA-1303).